The primary structure comprises 616 residues: Sulfite reductase [NADPH] hemoprotein beta-component (616 aa).

Residues methionine 1 to alanine 10 show a composition bias toward basic and acidic residues. Residues methionine 1–isoleucine 35 are disordered. Over residues glutamate 11–alanine 22 the composition is skewed to low complexity. Cysteine 470, cysteine 476, cysteine 515, and cysteine 519 together coordinate [4Fe-4S] cluster. Cysteine 519 lines the siroheme pocket.

This sequence belongs to the nitrite and sulfite reductase 4Fe-4S domain family. In terms of assembly, alpha(8)-beta(8). The alpha component is a flavoprotein, the beta component is a hemoprotein. Siroheme serves as cofactor. It depends on [4Fe-4S] cluster as a cofactor.

It catalyses the reaction hydrogen sulfide + 3 NADP(+) + 3 H2O = sulfite + 3 NADPH + 4 H(+). Its pathway is sulfur metabolism; hydrogen sulfide biosynthesis; hydrogen sulfide from sulfite (NADPH route): step 1/1. Its function is as follows. Component of the sulfite reductase complex that catalyzes the 6-electron reduction of sulfite to sulfide. This is one of several activities required for the biosynthesis of L-cysteine from sulfate. The chain is Sulfite reductase [NADPH] hemoprotein beta-component from Methylobacterium radiotolerans (strain ATCC 27329 / DSM 1819 / JCM 2831 / NBRC 15690 / NCIMB 10815 / 0-1).